The chain runs to 136 residues: Histone H3.3C (136 aa).

Over residues 1–10 the composition is skewed to polar residues; that stretch reads MALTKQTARK. The tract at residues 1–44 is disordered; it reads MALTKQTARKSTGGKAPRKQLATKATRKSAPSTGGVKKPHRYRP. At Thr-4 the chain carries Phosphothreonine; by HASPIN. Lys-5 carries the allysine; alternate modification. Lys-5 is subject to N6,N6,N6-trimethyllysine; alternate. Lys-5 is subject to N6,N6-dimethyllysine; alternate. N6-(2-hydroxyisobutyryl)lysine; alternate is present on Lys-5. Position 5 is an N6-(beta-hydroxybutyryl)lysine; alternate (Lys-5). Lys-5 carries the N6-acetyllysine; alternate modification. N6-methyllysine; alternate is present on Lys-5. Gln-6 is subject to 5-glutamyl dopamine; alternate. At Gln-6 the chain carries 5-glutamyl serotonin; alternate. A Phosphothreonine; by PKC modification is found at Thr-7. Arg-9 bears the Citrulline; alternate mark. The residue at position 9 (Arg-9) is a Symmetric dimethylarginine; by PRMT5; alternate. Lys-10 is modified (N6,N6,N6-trimethyllysine; alternate). N6,N6-dimethyllysine; alternate is present on Lys-10. Residue Lys-10 is modified to N6-(2-hydroxyisobutyryl)lysine; alternate. Position 10 is an N6-(beta-hydroxybutyryl)lysine; alternate (Lys-10). An N6-acetyllysine; alternate modification is found at Lys-10. Lys-10 carries the post-translational modification N6-methyllysine; alternate. An N6-lactoyllysine; alternate modification is found at Lys-10. Ser-11 carries the ADP-ribosylserine; alternate modification. The residue at position 11 (Ser-11) is a Phosphoserine; alternate; by AURKB, AURKC, RPS6KA3, RPS6KA4 and RPS6KA5. At Thr-12 the chain carries Phosphothreonine; by PKC. Lys-15 bears the N6-(2-hydroxyisobutyryl)lysine; alternate mark. Lys-15 is subject to N6-(beta-hydroxybutyryl)lysine; alternate. Residue Lys-15 is modified to N6-acetyllysine; alternate. Residue Lys-15 is modified to N6-lactoyllysine; alternate. The residue at position 15 (Lys-15) is an N6-glutaryllysine; alternate. Lys-15 carries the N6-succinyllysine; alternate modification. Arg-18 is subject to Citrulline; alternate. Arg-18 is modified (asymmetric dimethylarginine; by CARM1; alternate). An N6-(2-hydroxyisobutyryl)lysine; alternate mark is found at Lys-19 and Lys-24. N6-(beta-hydroxybutyryl)lysine; alternate occurs at positions 19 and 24. Residues Lys-19 and Lys-24 each carry the N6-acetyllysine; alternate modification. N6-methyllysine; alternate occurs at positions 19 and 24. Lys-19 and Lys-24 each carry N6-lactoyllysine; alternate. An N6-glutaryllysine; alternate mark is found at Lys-19 and Lys-24. An N6-butyryllysine; alternate mark is found at Lys-19 and Lys-24. At Arg-27 the chain carries Citrulline. Lys-28 bears the N6,N6,N6-trimethyllysine; alternate mark. Lys-28 is subject to N6,N6-dimethyllysine; alternate. Lys-28 carries the post-translational modification N6-(2-hydroxyisobutyryl)lysine; alternate. Lys-28 is subject to N6-acetyllysine; alternate. Position 28 is an N6-methyllysine; alternate (Lys-28). Lys-28 carries the post-translational modification N6-lactoyllysine; alternate. At Lys-28 the chain carries N6-glutaryllysine; alternate. At Ser-29 the chain carries ADP-ribosylserine; alternate. At Ser-29 the chain carries Phosphoserine; alternate; by AURKB, AURKC and RPS6KA5. A Phosphoserine modification is found at Ser-32. Lys-37 bears the N6,N6,N6-trimethyllysine; alternate mark. An N6,N6-dimethyllysine; alternate modification is found at Lys-37. The residue at position 37 (Lys-37) is an N6-(2-hydroxyisobutyryl)lysine; alternate. Position 37 is an N6-acetyllysine; alternate (Lys-37). N6-methyllysine; alternate is present on Lys-37. Lys-38 is modified (N6-methyllysine). Tyr-42 bears the Phosphotyrosine mark. Position 57 is an N6,N6,N6-trimethyllysine; alternate (Lys-57). Lys-57 carries the N6-(2-hydroxyisobutyryl)lysine; alternate modification. N6-(beta-hydroxybutyryl)lysine; alternate is present on Lys-57. At Lys-57 the chain carries N6-acetyllysine; alternate. Lys-57 carries the post-translational modification N6-lactoyllysine; alternate. Position 57 is an N6-glutaryllysine; alternate (Lys-57). Lys-57 carries the N6-succinyllysine; alternate modification. An N6-methyllysine; by EHMT2; alternate modification is found at Lys-57. Residue Ser-58 is modified to Phosphoserine. Residues Lys-65 and Lys-80 each carry the N6-(2-hydroxyisobutyryl)lysine; alternate modification. Residues Lys-65 and Lys-80 each carry the N6-methyllysine; alternate modification. An N6,N6,N6-trimethyllysine; alternate modification is found at Lys-80. Residue Lys-80 is modified to N6,N6-dimethyllysine; alternate. Residue Lys-80 is modified to N6-acetyllysine; alternate. Lys-80 carries the post-translational modification N6-lactoyllysine; alternate. An N6-glutaryllysine; alternate modification is found at Lys-80. The residue at position 80 (Lys-80) is an N6-succinyllysine; alternate. Residue Thr-81 is modified to Phosphothreonine. Ser-87 carries the phosphoserine modification. Thr-108 carries the phosphothreonine modification. N6-acetyllysine; alternate occurs at positions 116 and 123. 2 positions are modified to N6-glutaryllysine; alternate: Lys-116 and Lys-123. Position 123 is an N6-(2-hydroxyisobutyryl)lysine; alternate (Lys-123). At Lys-123 the chain carries N6-methyllysine; alternate. The residue at position 123 (Lys-123) is an N6-succinyllysine; alternate.

Belongs to the histone H3 family. As to quaternary structure, the nucleosome is a histone octamer containing two molecules each of H2A, H2B, H3 and H4 assembled in one H3-H4 heterotetramer and two H2A-H2B heterodimers. The octamer wraps approximately 147 bp of DNA. In terms of processing, acetylation is generally linked to gene activation. Acetylation on Lys-10 (H3K9ac) impairs methylation at Arg-9 (H3R8me2s). Acetylation on Lys-19 (H3K18ac) and Lys-24 (H3K24ac) favors methylation at Arg-18 (H3R17me). Acetylation at Lys-123 (H3K122ac) by EP300/p300 plays a central role in chromatin structure: localizes at the surface of the histone octamer and stimulates transcription, possibly by promoting nucleosome instability. Post-translationally, citrullination at Arg-9 (H3R8ci) and/or Arg-18 (H3R17ci) by PADI4 impairs methylation and represses transcription. Butyrylation of histones marks active promoters and competes with histone acetylation. It is present during late spermatogenesis. In terms of processing, asymmetric dimethylation at Arg-18 (H3R17me2a) by CARM1 is linked to gene activation. Symmetric dimethylation at Arg-9 (H3R8me2s) by PRMT5 is linked to gene repression. Post-translationally, methylation at Lys-5 (H3K4me), Lys-37 and Lys-80 are linked to gene activation. Methylation at Lys-5 (H3K4me) facilitates subsequent acetylation of H3 and H4. Methylation at Lys-80 is associated with DNA double-strand break (DSB) responses and is a specific target for TP53BP1. Methylation at Lys-10 (H3K9me) and Lys-28 (H3K27me) are linked to gene repression. Methylation at Lys-10 (H3K9me) is a specific target for HP1 proteins (CBX1, CBX3 and CBX5) and prevents subsequent phosphorylation at Ser-11 (H3S10ph) and acetylation of H3 and H4. Methylation at Lys-5 (H3K4me) and Lys-80 require preliminary monoubiquitination of H2B at 'Lys-120'. Methylation at Lys-10 (H3K9me) and Lys-28 (H3K27me) are enriched in inactive X chromosome chromatin. Monomethylation at Lys-57 (H3K56me1) by EHMT2/G9A in G1 phase promotes interaction with PCNA and is required for DNA replication. Phosphorylated at Thr-4 (H3T3ph) by HASPIN during prophase and dephosphorylated during anaphase. Phosphorylation at Ser-11 (H3S10ph) by AURKB is crucial for chromosome condensation and cell-cycle progression during mitosis and meiosis. In addition phosphorylation at Ser-11 (H3S10ph) by RPS6KA4 and RPS6KA5 is important during interphase because it enables the transcription of genes following external stimulation, like mitogens, stress, growth factors or UV irradiation and result in the activation of genes, such as c-fos and c-jun. Phosphorylation at Ser-11 (H3S10ph), which is linked to gene activation, prevents methylation at Lys-10 (H3K9me) but facilitates acetylation of H3 and H4. Phosphorylation at Ser-11 (H3S10ph) by AURKB mediates the dissociation of HP1 proteins (CBX1, CBX3 and CBX5) from heterochromatin. Phosphorylation at Ser-11 (H3S10ph) is also an essential regulatory mechanism for neoplastic cell transformation. Phosphorylated at Ser-29 (H3S28ph) by MAP3K20 isoform 1, RPS6KA5 or AURKB during mitosis or upon ultraviolet B irradiation. Phosphorylation at Thr-7 (H3T6ph) by PRKCB is a specific tag for epigenetic transcriptional activation that prevents demethylation of Lys-5 (H3K4me) by LSD1/KDM1A. At centromeres, specifically phosphorylated at Thr-12 (H3T11ph) from prophase to early anaphase, by DAPK3 and PKN1. Phosphorylation at Thr-12 (H3T11ph) by PKN1 or isoform M2 of PKM (PKM2) is a specific tag for epigenetic transcriptional activation that promotes demethylation of Lys-10 (H3K9me) by KDM4C/JMJD2C. Phosphorylation at Tyr-42 (H3Y41ph) by JAK2 promotes exclusion of CBX5 (HP1 alpha) from chromatin. In terms of processing, lysine deamination at Lys-5 (H3K4all) to form allysine is mediated by LOXL2. Allysine formation by LOXL2 only takes place on H3K4me3 and results in gene repression. Post-translationally, succinylation at Lys-80 (H3K79succ) by KAT2A takes place with a maximum frequency around the transcription start sites of genes. It gives a specific tag for epigenetic transcription activation. Desuccinylation at Lys-123 (H3K122succ) by SIRT7 in response to DNA damage promotes chromatin condensation and double-strand breaks (DSBs) repair. Serine ADP-ribosylation constitutes the primary form of ADP-ribosylation of proteins in response to DNA damage. Serine ADP-ribosylation at Ser-11 (H3S10ADPr) is mutually exclusive with phosphorylation at Ser-11 (H3S10ph) and impairs acetylation at Lys-10 (H3K9ac).

It localises to the nucleus. Its subcellular location is the chromosome. Functionally, core component of nucleosome. Nucleosomes wrap and compact DNA into chromatin, limiting DNA accessibility to the cellular machineries which require DNA as a template. Histones thereby play a central role in transcription regulation, DNA repair, DNA replication and chromosomal stability. DNA accessibility is regulated via a complex set of post-translational modifications of histones, also called histone code, and nucleosome remodeling. The chain is Histone H3.3C from Mus musculus (Mouse).